The sequence spans 284 residues: Acetylglutamate kinase (284 aa).

Residues 64-65 (GG), Arg-86, and Asn-181 contribute to the substrate site.

This sequence belongs to the acetylglutamate kinase family. ArgB subfamily.

The protein localises to the cytoplasm. It catalyses the reaction N-acetyl-L-glutamate + ATP = N-acetyl-L-glutamyl 5-phosphate + ADP. It participates in amino-acid biosynthesis; L-arginine biosynthesis; N(2)-acetyl-L-ornithine from L-glutamate: step 2/4. In terms of biological role, catalyzes the ATP-dependent phosphorylation of N-acetyl-L-glutamate. This Nitratiruptor sp. (strain SB155-2) protein is Acetylglutamate kinase.